A 340-amino-acid chain; its full sequence is Methionine import ATP-binding protein MetN 2 (340 aa).

Residues 5–244 (VRFESVTKTF…PQAPASKSFV (240 aa)) enclose the ABC transporter domain. 41-48 (GYSGAGKS) is a binding site for ATP.

The protein belongs to the ABC transporter superfamily. Methionine importer (TC 3.A.1.24) family. In terms of assembly, the complex is composed of two ATP-binding proteins (MetN), two transmembrane proteins (MetI) and a solute-binding protein (MetQ).

The protein resides in the cell membrane. It catalyses the reaction L-methionine(out) + ATP + H2O = L-methionine(in) + ADP + phosphate + H(+). It carries out the reaction D-methionine(out) + ATP + H2O = D-methionine(in) + ADP + phosphate + H(+). Part of the ABC transporter complex MetNIQ involved in methionine import. Responsible for energy coupling to the transport system. The polypeptide is Methionine import ATP-binding protein MetN 2 (Rhodococcus jostii (strain RHA1)).